The chain runs to 345 residues: tRNA N6-adenosine threonylcarbamoyltransferase (345 aa).

Residues His109 and His113 each coordinate Fe cation. Substrate is bound by residues 136–140, Asp169, Gly182, Asp186, and Asn284; that span reads TVSGG. Residue Asp312 participates in Fe cation binding.

Belongs to the KAE1 / TsaD family. It depends on Fe(2+) as a cofactor.

The protein localises to the cytoplasm. It catalyses the reaction L-threonylcarbamoyladenylate + adenosine(37) in tRNA = N(6)-L-threonylcarbamoyladenosine(37) in tRNA + AMP + H(+). Functionally, required for the formation of a threonylcarbamoyl group on adenosine at position 37 (t(6)A37) in tRNAs that read codons beginning with adenine. Is involved in the transfer of the threonylcarbamoyl moiety of threonylcarbamoyl-AMP (TC-AMP) to the N6 group of A37, together with TsaE and TsaB. TsaD likely plays a direct catalytic role in this reaction. This is tRNA N6-adenosine threonylcarbamoyltransferase from Chlorobium phaeovibrioides (strain DSM 265 / 1930) (Prosthecochloris vibrioformis (strain DSM 265)).